A 456-amino-acid polypeptide reads, in one-letter code: MRAWEEFLLLQEKEIGVDTVNKWLRSLKVLCFDACNLYLEAKDSFQVTWFEEHIRHKVKASLINNNGKPIRVRVTSLDKSTPFKETQIQQEKTAYFTMKYGDIDPNMSFANFLVTPENDLPVRILQEFAKVSEQGKGFPFNPIYLFGPESSGKTHLMQAAVGGLREAGVKTLYVTSELFTEHLVSAIRSGEMQRFRAFYRNVEALFIEDIEVLSGKGATQEEFFHTFNSLHTEGKLIVISSTFAPGDLKAMEERLISRFEWGISIPVSPLIREGLKSFLERRTEKLNIRIEETALDFLIQALSSHVKSLLHALTTLAKRVAYKKLSHQMLYQGDIEALLHDVLQAAESIRLTPSGIVRATAQYYGVSPESVLGRSQSREYVLPRQVAMFLCRQKLSLSYVKIGEVFSRDHSTVISSIRAISQKLEEDDRECDVSRAIQELTKRLSSAYQSLDFIED.

Residues 1-68 (MRAWEEFLLL…KASLINNNGK (68 aa)) are domain I, interacts with DnaA modulators. Positions 68-101 (KPIRVRVTSLDKSTPFKETQIQQEKTAYFTMKYG) are domain II. The tract at residues 102 to 320 (DIDPNMSFAN…HALTTLAKRV (219 aa)) is domain III, AAA+ region. ATP-binding residues include S150, G152, K153, and T154. The domain IV, binds dsDNA stretch occupies residues 321-456 (AYKKLSHQML…AYQSLDFIED (136 aa)).

The protein belongs to the DnaA family. In terms of assembly, oligomerizes as a right-handed, spiral filament on DNA at oriC.

The protein localises to the cytoplasm. Functionally, plays an essential role in the initiation and regulation of chromosomal replication. ATP-DnaA binds to the origin of replication (oriC) to initiate formation of the DNA replication initiation complex once per cell cycle. Binds the DnaA box (a 9 base pair repeat at the origin) and separates the double-stranded (ds)DNA. Forms a right-handed helical filament on oriC DNA; dsDNA binds to the exterior of the filament while single-stranded (ss)DNA is stabiized in the filament's interior. The ATP-DnaA-oriC complex binds and stabilizes one strand of the AT-rich DNA unwinding element (DUE), permitting loading of DNA polymerase. After initiation quickly degrades to an ADP-DnaA complex that is not apt for DNA replication. Binds acidic phospholipids. This is Chromosomal replication initiator protein DnaA 1 from Chlamydia trachomatis serovar D (strain ATCC VR-885 / DSM 19411 / UW-3/Cx).